We begin with the raw amino-acid sequence, 223 residues long: MAASSPSLLLPLGSASRNGLTTKNPNSSRYIAARVIASETREQSCKISNLSSRREAMLLVLGVSGGLSMSSLAAYAAGLPPEDKPRLCEAECEKELENVPMVTTESGLQYKDIKVGRGPSPPVGFQVAANYVAMVPSGQIFDSSLEKGLPYLFRVGSGQVIKGLDEGILSMKAGGKRRLYIPGPLAFPKGLVSAPGRPRVAPNSPVIFDVSLEFIPGLDSEEE.

A chloroplast-targeting transit peptide spans 1–36 (MAASSPSLLLPLGSASRNGLTTKNPNSSRYIAARVI). Residues 37–76 (ASETREQSCKISNLSSRREAMLLVLGVSGGLSMSSLAAYA) constitute a thylakoid transit peptide. The region spanning 124–216 (GFQVAANYVA…IFDVSLEFIP (93 aa)) is the PPIase FKBP-type domain.

This sequence belongs to the FKBP-type PPIase family.

The protein resides in the plastid. The protein localises to the chloroplast thylakoid lumen. It carries out the reaction [protein]-peptidylproline (omega=180) = [protein]-peptidylproline (omega=0). Functionally, PPIases accelerate the folding of proteins. It catalyzes the cis-trans isomerization of proline imidic peptide bonds in oligopeptides. This Arabidopsis thaliana (Mouse-ear cress) protein is Peptidyl-prolyl cis-trans isomerase FKBP16-3, chloroplastic (FKBP16-3).